The chain runs to 151 residues: UPF0178 protein Desal_2673 (151 aa).

The protein belongs to the UPF0178 family.

This chain is UPF0178 protein Desal_2673, found in Maridesulfovibrio salexigens (strain ATCC 14822 / DSM 2638 / NCIMB 8403 / VKM B-1763) (Desulfovibrio salexigens).